Reading from the N-terminus, the 1155-residue chain is Alpha,alpha-trehalose-phosphate synthase [UDP-forming] 1 (1155 aa).

The interval 56–94 is disordered; it reads LQRRRSVSSRGGSLRGSMDSLNDSGQNGAEDVIGVEDEE. Residues 63–72 are compositionally biased toward low complexity; sequence SSRGGSLRGS.

The protein in the N-terminal section; belongs to the glycosyltransferase 20 family. It in the C-terminal section; belongs to the gob-1 trehalose phosphatase family.

It carries out the reaction D-glucose 6-phosphate + UDP-alpha-D-glucose = alpha,alpha-trehalose 6-phosphate + UDP + H(+). Functionally, catalyzes the production of trehalose from glucose-6-phosphate and UDP-alpha-D-glucose in a 2 step process. The polypeptide is Alpha,alpha-trehalose-phosphate synthase [UDP-forming] 1 (tps-1) (Aphelenchoides avenae (Mycophagous nematode worm)).